A 335-amino-acid polypeptide reads, in one-letter code: MNCAFTKELKDEIYQKNYTEHEILQNAYNGKLDILLPVEDASEEAIRSITKIVQDLSFYEFSGSPALLLHPDLYSTFIHTGIATIVSSSDNDNKICISQGILSVTLDKDSYLVSGIDAKPSSSEPKDTLWVANIDLKSAFLRPQWKGFERLKAALGRLPGKWSFYLTFPTEKVDQSYQNNLSHSLPVPMISREINLKKGKLDQAKIPPPLVSTLNRNELFPSNGPLEVLEILSFLRCNAKCVQNSFVPDPYISRYKPSCAVTDVLYLSIKGLFSSSTCLELYELIRNISWNFIGVESFNSFRDVDNSSQLHSGDSSLLSFYDSRTERIRWTWRLS.

This is an uncharacterized protein from Schizosaccharomyces pombe (strain 972 / ATCC 24843) (Fission yeast).